We begin with the raw amino-acid sequence, 417 residues long: Putative competence-damage inducible protein (417 aa).

Belongs to the CinA family.

The chain is Putative competence-damage inducible protein from Leuconostoc citreum (strain KM20).